We begin with the raw amino-acid sequence, 421 residues long: Gamma-glutamyl phosphate reductase (421 aa).

This sequence belongs to the gamma-glutamyl phosphate reductase family.

It is found in the cytoplasm. It catalyses the reaction L-glutamate 5-semialdehyde + phosphate + NADP(+) = L-glutamyl 5-phosphate + NADPH + H(+). It participates in amino-acid biosynthesis; L-proline biosynthesis; L-glutamate 5-semialdehyde from L-glutamate: step 2/2. Catalyzes the NADPH-dependent reduction of L-glutamate 5-phosphate into L-glutamate 5-semialdehyde and phosphate. The product spontaneously undergoes cyclization to form 1-pyrroline-5-carboxylate. This is Gamma-glutamyl phosphate reductase from Shewanella pealeana (strain ATCC 700345 / ANG-SQ1).